A 186-amino-acid chain; its full sequence is Adenine phosphoribosyltransferase (186 aa).

This sequence belongs to the purine/pyrimidine phosphoribosyltransferase family. As to quaternary structure, homodimer.

It is found in the cytoplasm. The catalysed reaction is AMP + diphosphate = 5-phospho-alpha-D-ribose 1-diphosphate + adenine. The protein operates within purine metabolism; AMP biosynthesis via salvage pathway; AMP from adenine: step 1/1. Functionally, catalyzes a salvage reaction resulting in the formation of AMP, that is energically less costly than de novo synthesis. This chain is Adenine phosphoribosyltransferase, found in Xanthomonas oryzae pv. oryzae (strain MAFF 311018).